Here is a 317-residue protein sequence, read N- to C-terminus: D-alanine--D-alanine ligase (317 aa).

The ATP-grasp domain occupies 104–303; the sequence is KRVWLQHGLP…YAELCVAILA (200 aa). 130–185 is a binding site for ATP; that stretch reads PDRLGLPLILKPPHEGSTVGITKVAACADMEQAYAAASHFDEVVLAEQFVRGRELT. Mg(2+)-binding residues include aspartate 257, glutamate 270, and asparagine 272.

The protein belongs to the D-alanine--D-alanine ligase family. Mg(2+) serves as cofactor. The cofactor is Mn(2+).

The protein localises to the cytoplasm. The catalysed reaction is 2 D-alanine + ATP = D-alanyl-D-alanine + ADP + phosphate + H(+). The protein operates within cell wall biogenesis; peptidoglycan biosynthesis. Cell wall formation. The chain is D-alanine--D-alanine ligase from Bordetella avium (strain 197N).